The sequence spans 580 residues: RuBisCO large subunit-binding protein subunit alpha, chloroplastic (580 aa).

A compositionally biased stretch (polar residues) spans 1-17; the sequence is MAQSQLAKGSRQTTGRP. The tract at residues 1-24 is disordered; the sequence is MAQSQLAKGSRQTTGRPFQNKPAR.

It belongs to the chaperonin (HSP60) family. Oligomer of probably six alpha and six beta subunits.

It localises to the plastid. The protein resides in the chloroplast. Functionally, this protein binds RuBisCO small and large subunits and is implicated in the assembly of the enzyme oligomer. The sequence is that of RuBisCO large subunit-binding protein subunit alpha, chloroplastic from Chlamydomonas reinhardtii (Chlamydomonas smithii).